A 225-amino-acid chain; its full sequence is Phosphoribosylformylglycinamidine synthase subunit PurQ (225 aa).

Residues 5–225 (RFGIVVFPGS…WQSIVQSLAG (221 aa)) form the Glutamine amidotransferase type-1 domain. Catalysis depends on C89, which acts as the Nucleophile. Catalysis depends on residues H198 and E200.

In terms of assembly, part of the FGAM synthase complex composed of 1 PurL, 1 PurQ and 2 PurS subunits.

Its subcellular location is the cytoplasm. It catalyses the reaction N(2)-formyl-N(1)-(5-phospho-beta-D-ribosyl)glycinamide + L-glutamine + ATP + H2O = 2-formamido-N(1)-(5-O-phospho-beta-D-ribosyl)acetamidine + L-glutamate + ADP + phosphate + H(+). The enzyme catalyses L-glutamine + H2O = L-glutamate + NH4(+). Its pathway is purine metabolism; IMP biosynthesis via de novo pathway; 5-amino-1-(5-phospho-D-ribosyl)imidazole from N(2)-formyl-N(1)-(5-phospho-D-ribosyl)glycinamide: step 1/2. In terms of biological role, part of the phosphoribosylformylglycinamidine synthase complex involved in the purines biosynthetic pathway. Catalyzes the ATP-dependent conversion of formylglycinamide ribonucleotide (FGAR) and glutamine to yield formylglycinamidine ribonucleotide (FGAM) and glutamate. The FGAM synthase complex is composed of three subunits. PurQ produces an ammonia molecule by converting glutamine to glutamate. PurL transfers the ammonia molecule to FGAR to form FGAM in an ATP-dependent manner. PurS interacts with PurQ and PurL and is thought to assist in the transfer of the ammonia molecule from PurQ to PurL. This is Phosphoribosylformylglycinamidine synthase subunit PurQ from Synechococcus sp. (strain JA-3-3Ab) (Cyanobacteria bacterium Yellowstone A-Prime).